Reading from the N-terminus, the 44-residue chain is Keratin-associated protein 20-3 (44 aa).

Belongs to the KRTAP type 20 family. Interacts with hair keratins.

In terms of biological role, in the hair cortex, hair keratin intermediate filaments are embedded in an interfilamentous matrix, consisting of hair keratin-associated proteins (KRTAP), which are essential for the formation of a rigid and resistant hair shaft through their extensive disulfide bond cross-linking with abundant cysteine residues of hair keratins. The matrix proteins include the high-sulfur and high-glycine-tyrosine keratins. In Homo sapiens (Human), this protein is Keratin-associated protein 20-3 (KRTAP20-3).